The chain runs to 439 residues: Xaa-Pro dipeptidase (439 aa).

Asp244, Asp255, His335, Glu380, and Glu418 together coordinate Mn(2+).

Belongs to the peptidase M24B family. Bacterial-type prolidase subfamily. Mn(2+) is required as a cofactor.

It catalyses the reaction Xaa-L-Pro dipeptide + H2O = an L-alpha-amino acid + L-proline. In terms of biological role, splits dipeptides with a prolyl residue in the C-terminal position. The polypeptide is Xaa-Pro dipeptidase (Shewanella frigidimarina (strain NCIMB 400)).